We begin with the raw amino-acid sequence, 301 residues long: Bifunctional protein FolD (301 aa).

NADP(+)-binding positions include 164 to 166 (GRS), Ser-191, and Ile-232.

This sequence belongs to the tetrahydrofolate dehydrogenase/cyclohydrolase family. In terms of assembly, homodimer.

The catalysed reaction is (6R)-5,10-methylene-5,6,7,8-tetrahydrofolate + NADP(+) = (6R)-5,10-methenyltetrahydrofolate + NADPH. The enzyme catalyses (6R)-5,10-methenyltetrahydrofolate + H2O = (6R)-10-formyltetrahydrofolate + H(+). It participates in one-carbon metabolism; tetrahydrofolate interconversion. Its function is as follows. Catalyzes the oxidation of 5,10-methylenetetrahydrofolate to 5,10-methenyltetrahydrofolate and then the hydrolysis of 5,10-methenyltetrahydrofolate to 10-formyltetrahydrofolate. In Borreliella afzelii (strain PKo) (Borrelia afzelii), this protein is Bifunctional protein FolD.